A 348-amino-acid polypeptide reads, in one-letter code: Rhodopsin (348 aa).

At Thr-1–Ala-33 the chain is on the extracellular side. An N-linked (GlcNAc...) asparagine glycan is attached at Asn-12. A helical membrane pass occupies residues Tyr-34–Val-58. Topologically, residues Thr-59–Asn-70 are cytoplasmic. The chain crosses the membrane as a helical span at residues Tyr-71–Tyr-93. The Extracellular segment spans residues Ser-94–Cys-107. A disulfide bridge connects residues Cys-107 and Cys-184. A helical membrane pass occupies residues Asn-108–Ile-130. Positions Glu-131–Trp-133 match the 'Ionic lock' involved in activated form stabilization motif. Residues Glu-131–His-149 lie on the Cytoplasmic side of the membrane. Residues Ala-150–Val-170 form a helical membrane-spanning segment. Topologically, residues Gly-171–Ser-199 are extracellular. An N-linked (GlcNAc...) asparagine glycan is attached at Asn-197. Residues Phe-200–Gly-221 form a helical membrane-spanning segment. The Cytoplasmic portion of the chain corresponds to Arg-222–Arg-249. The chain crosses the membrane as a helical span at residues Met-250–Phe-271. Residues Ile-272–Leu-283 are Extracellular-facing. Residues Phe-284–Cys-305 form a helical membrane-spanning segment. Lys-293 carries the N6-(retinylidene)lysine modification. The Cytoplasmic segment spans residues Met-306–Ala-348. Cys-320 carries S-palmitoyl cysteine lipidation. Positions Gly-327 to Ala-348 are disordered. The segment covering Ala-332–Ala-348 has biased composition (low complexity).

This sequence belongs to the G-protein coupled receptor 1 family. Opsin subfamily. Phosphorylated on some or all of the serine and threonine residues present in the C-terminal region. In terms of processing, contains one covalently linked retinal chromophore.

It localises to the membrane. The protein resides in the cell projection. The protein localises to the cilium. It is found in the photoreceptor outer segment. Photoreceptor required for image-forming vision at low light intensity. While most salt water fish species use retinal as chromophore, most freshwater fish use 3-dehydroretinal, or a mixture of retinal and 3-dehydroretinal. Light-induced isomerization of 11-cis to all-trans retinal triggers a conformational change that activates signaling via G-proteins. Subsequent receptor phosphorylation mediates displacement of the bound G-protein alpha subunit by arrestin and terminates signaling. The chain is Rhodopsin (rho) from Neoniphon argenteus (Clearfin squirrelfish).